The primary structure comprises 293 residues: Indole-3-glycerol phosphate synthase (293 aa).

Belongs to the TrpC family.

The enzyme catalyses 1-(2-carboxyphenylamino)-1-deoxy-D-ribulose 5-phosphate + H(+) = (1S,2R)-1-C-(indol-3-yl)glycerol 3-phosphate + CO2 + H2O. The protein operates within amino-acid biosynthesis; L-tryptophan biosynthesis; L-tryptophan from chorismate: step 4/5. In Prochlorococcus marinus (strain SARG / CCMP1375 / SS120), this protein is Indole-3-glycerol phosphate synthase.